A 332-amino-acid chain; its full sequence is Ribosomal RNA small subunit methyltransferase C (332 aa).

The protein belongs to the methyltransferase superfamily. RsmC family. In terms of assembly, monomer.

The protein localises to the cytoplasm. It catalyses the reaction guanosine(1207) in 16S rRNA + S-adenosyl-L-methionine = N(2)-methylguanosine(1207) in 16S rRNA + S-adenosyl-L-homocysteine + H(+). Specifically methylates the guanine in position 1207 of 16S rRNA in the 30S particle. The chain is Ribosomal RNA small subunit methyltransferase C from Pseudomonas putida (strain GB-1).